Here is a 39-residue protein sequence, read N- to C-terminus: Osmotin-like protein (39 aa).

This sequence belongs to the thaumatin family. In terms of processing, contains intrachain disulfide bonds.

In terms of biological role, may be an important antifungal protein. This chain is Osmotin-like protein, found in Hevea brasiliensis (Para rubber tree).